The following is a 582-amino-acid chain: ABC transporter-like protein ECU11_1340 (582 aa).

The region spanning 15–257 (VPNQNLSSNE…LGTKGIHNDG (243 aa)) is the ABC transporter domain. 47–54 (GTSGSGKT) is a binding site for ATP. Residues 316 to 519 (YVSFQMAIRQ…EIDAFISNFF (204 aa)) enclose the ABC transmembrane type-2 domain. The next 6 membrane-spanning stretches (helical) occupy residues 335-355 (ILYS…GKYI), 359-378 (FSIA…YVMN), 412-432 (TLVS…FGLI), 436-456 (HAFL…SMLF), 482-502 (GALL…SVIP), and 551-571 (SFLR…SSIL).

Belongs to the ABC transporter superfamily.

The protein resides in the membrane. The protein is ABC transporter-like protein ECU11_1340 of Encephalitozoon cuniculi (strain GB-M1) (Microsporidian parasite).